A 363-amino-acid polypeptide reads, in one-letter code: Peptide chain release factor 2 (363 aa).

The residue at position 251 (Gln251) is an N5-methylglutamine.

Belongs to the prokaryotic/mitochondrial release factor family. Methylated by PrmC. Methylation increases the termination efficiency of RF2.

It localises to the cytoplasm. Peptide chain release factor 2 directs the termination of translation in response to the peptide chain termination codons UGA and UAA. The chain is Peptide chain release factor 2 (prfB) from Helicobacter pylori (strain J99 / ATCC 700824) (Campylobacter pylori J99).